The primary structure comprises 567 residues: Cytochrome P450 monooxygenase 231 (567 aa).

The helical transmembrane segment at 3–23 (VSTNELAILAIVLLATGVLFY) threads the bilayer. N-linked (GlcNAc...) asparagine glycosylation is found at Asn-81 and Asn-223. Residue Cys-475 participates in heme binding.

It belongs to the cytochrome P450 family. It depends on heme as a cofactor.

Its subcellular location is the membrane. Its pathway is secondary metabolite biosynthesis. In terms of biological role, cytochrome P450 monooxygenase that is able to use anthracene, carbazole, pyrene, and phenanthrene as substrates for oxidation. These multifunctional properties against a series of polycyclic aromatic hydrocarbons (PAHs) suggest that CYP231 would play important roles, at least in part, in fungal metabolic systems involved in xenobiotic detoxification. This chain is Cytochrome P450 monooxygenase 231, found in Postia placenta (strain ATCC 44394 / Madison 698-R) (Brown rot fungus).